The primary structure comprises 860 residues: Transforming growth factor-beta receptor-associated protein 1 (860 aa).

The CNH domain occupies 24-297 (RVNIECVECC…HILQDFEGRV (274 aa)). A CHCR repeat occupies 564–728 (RPLDEQQKNS…LLAIYLHAGP (165 aa)).

It belongs to the TRAP1 family. As to quaternary structure, interacts with TGFBR2 and ACVR2B; in the absence of ligand stimulation. Interacts with TGFBR1, ACVRL1, BMPR1A and ACVR1B; in the absence of ligand stimulation and to a less extent. Interacts with SMAD4; the interaction seems to be mutually exclusive with the interaction of SMAD4 and phosphorylated SMAD2. May interact with ALOX5. Interacts with RAB5C. Interacts with VPS8, VPS11 and VPS16. Component of the putative class C core vacuole/endosome tethering (CORVET) complex; the core of which composed of the class C Vps proteins VPS11, VPS16, VPS18 and VPS33A, is associated with VPS8 and TGFBRAP1.

It localises to the cytoplasm. It is found in the early endosome. Plays a role in the TGF-beta/activin signaling pathway. It associates with inactive heteromeric TGF-beta and activin receptor complexes, mainly through the type II receptor, and is released upon activation of signaling. May recruit SMAD4 to the vicinity of the receptor complex and facilitate its interaction with receptor-regulated Smads, such as SMAD2. In terms of biological role, plays a role in vesicle-mediated protein trafficking of the endocytic membrane transport pathway. Believed to act as a component of the putative CORVET endosomal tethering complexes which is proposed to be involved in the Rab5-to-Rab7 endosome conversion probably implicating MON1A/B, and via binding SNAREs and SNARE complexes to mediate tethering and docking events during SNARE-mediated membrane fusion. The CORVET complex is proposed to function as a Rab5 effector to mediate early endosome fusion probably in specific endosome subpopulations. Functions predominantly in APPL1-containing endosomes and in degradative but not recycling trafficking of endocytosed cargo. This Homo sapiens (Human) protein is Transforming growth factor-beta receptor-associated protein 1 (TGFBRAP1).